A 70-amino-acid chain; its full sequence is Brevinin-1MT1 (70 aa).

The N-terminal stretch at 1 to 22 (MFTLKKSLLLLFFLGTINLSLC) is a signal peptide. Residues 23–44 (EQERDADEEERRDDDEMDVEVE) constitute a propeptide that is removed on maturation. Cys64 and Cys70 are joined by a disulfide.

It belongs to the frog skin active peptide (FSAP) family. Brevinin subfamily. As to expression, expressed by the skin glands.

The protein resides in the secreted. In terms of biological role, antimicrobial peptide with activity against a variety of Gram-negative and Gram-positive bacteria and against fungi. Shows strong hemolytic activity against human erythrocytes. This is Brevinin-1MT1 from Amolops mantzorum (Sichuan torrent frog).